Consider the following 209-residue polypeptide: ATP phosphoribosyltransferase (209 aa).

Belongs to the ATP phosphoribosyltransferase family. Short subfamily. Heteromultimer composed of HisG and HisZ subunits.

Its subcellular location is the cytoplasm. It catalyses the reaction 1-(5-phospho-beta-D-ribosyl)-ATP + diphosphate = 5-phospho-alpha-D-ribose 1-diphosphate + ATP. It functions in the pathway amino-acid biosynthesis; L-histidine biosynthesis; L-histidine from 5-phospho-alpha-D-ribose 1-diphosphate: step 1/9. In terms of biological role, catalyzes the condensation of ATP and 5-phosphoribose 1-diphosphate to form N'-(5'-phosphoribosyl)-ATP (PR-ATP). Has a crucial role in the pathway because the rate of histidine biosynthesis seems to be controlled primarily by regulation of HisG enzymatic activity. The chain is ATP phosphoribosyltransferase from Alkaliphilus metalliredigens (strain QYMF).